The chain runs to 80 residues: Exodeoxyribonuclease 7 small subunit (80 aa).

Belongs to the XseB family. In terms of assembly, heterooligomer composed of large and small subunits.

It localises to the cytoplasm. The catalysed reaction is Exonucleolytic cleavage in either 5'- to 3'- or 3'- to 5'-direction to yield nucleoside 5'-phosphates.. Functionally, bidirectionally degrades single-stranded DNA into large acid-insoluble oligonucleotides, which are then degraded further into small acid-soluble oligonucleotides. The polypeptide is Exodeoxyribonuclease 7 small subunit (Maridesulfovibrio salexigens (strain ATCC 14822 / DSM 2638 / NCIMB 8403 / VKM B-1763) (Desulfovibrio salexigens)).